The following is a 505-amino-acid chain: 2,3-bisphosphoglycerate-independent phosphoglycerate mutase (505 aa).

Mn(2+)-binding residues include Asp13 and Ser63. The active-site Phosphoserine intermediate is the Ser63. Substrate contacts are provided by residues His124, 153–154 (RD), Arg183, Arg189, 254–257 (RADR), and Lys330. Positions 396, 400, 437, 438, and 456 each coordinate Mn(2+).

It belongs to the BPG-independent phosphoglycerate mutase family. In terms of assembly, monomer. Requires Mn(2+) as cofactor.

It carries out the reaction (2R)-2-phosphoglycerate = (2R)-3-phosphoglycerate. It functions in the pathway carbohydrate degradation; glycolysis; pyruvate from D-glyceraldehyde 3-phosphate: step 3/5. In terms of biological role, catalyzes the interconversion of 2-phosphoglycerate and 3-phosphoglycerate. The sequence is that of 2,3-bisphosphoglycerate-independent phosphoglycerate mutase from Dinoroseobacter shibae (strain DSM 16493 / NCIMB 14021 / DFL 12).